The following is a 505-amino-acid chain: Glycerol kinase (505 aa).

Residue Thr12 coordinates ADP. ATP is bound by residues Thr12, Thr13, and Ser14. Thr12 provides a ligand contact to sn-glycerol 3-phosphate. Arg16 lines the ADP pocket. Arg82, Glu83, Tyr134, and Asp249 together coordinate sn-glycerol 3-phosphate. Glycerol contacts are provided by Arg82, Glu83, Tyr134, Asp249, and Gln250. Residues Thr271 and Gly315 each coordinate ADP. The ATP site is built by Thr271, Gly315, Gln319, and Gly416. Residues Gly416 and Asn420 each contribute to the ADP site.

This sequence belongs to the FGGY kinase family.

It catalyses the reaction glycerol + ATP = sn-glycerol 3-phosphate + ADP + H(+). It participates in polyol metabolism; glycerol degradation via glycerol kinase pathway; sn-glycerol 3-phosphate from glycerol: step 1/1. With respect to regulation, inhibited by fructose 1,6-bisphosphate (FBP). Key enzyme in the regulation of glycerol uptake and metabolism. Catalyzes the phosphorylation of glycerol to yield sn-glycerol 3-phosphate. This is Glycerol kinase from Mycolicibacterium vanbaalenii (strain DSM 7251 / JCM 13017 / BCRC 16820 / KCTC 9966 / NRRL B-24157 / PYR-1) (Mycobacterium vanbaalenii).